The primary structure comprises 971 residues: uncharacterized protein (971 aa).

This is an uncharacterized protein from Borreliella burgdorferi (strain ATCC 35210 / DSM 4680 / CIP 102532 / B31) (Borrelia burgdorferi).